The sequence spans 332 residues: Fructose-1,6-bisphosphatase class 1 1 (332 aa).

Mg(2+) contacts are provided by Glu-92, Asp-115, Leu-117, and Asp-118. Substrate-binding positions include 118–121, Asn-211, Tyr-244, 262–264, and Lys-274; these read DGSS and YLY. Glu-280 contributes to the Mg(2+) binding site.

Belongs to the FBPase class 1 family. As to quaternary structure, homotetramer. It depends on Mg(2+) as a cofactor.

The protein resides in the cytoplasm. The enzyme catalyses beta-D-fructose 1,6-bisphosphate + H2O = beta-D-fructose 6-phosphate + phosphate. Its pathway is carbohydrate biosynthesis; gluconeogenesis. The chain is Fructose-1,6-bisphosphatase class 1 1 from Christiangramia forsetii (strain DSM 17595 / CGMCC 1.15422 / KT0803) (Gramella forsetii).